The primary structure comprises 230 residues: Ribonuclease 3 (230 aa).

An RNase III domain is found at 10–133; it reads DPRLLSRIGY…IIGAIYLDSS (124 aa). Glutamate 46 provides a ligand contact to Mg(2+). Aspartate 50 is an active-site residue. Mg(2+) contacts are provided by aspartate 119 and glutamate 122. Residue glutamate 122 is part of the active site. The region spanning 161 to 230 is the DRBM domain; that stretch reads DPKSRLQEYL…AAEILKLLEQ (70 aa).

It belongs to the ribonuclease III family. Homodimer. It depends on Mg(2+) as a cofactor.

The protein localises to the cytoplasm. The enzyme catalyses Endonucleolytic cleavage to 5'-phosphomonoester.. Its function is as follows. Digests double-stranded RNA. Involved in the processing of primary rRNA transcript to yield the immediate precursors to the large and small rRNAs (23S and 16S). Processes some mRNAs, and tRNAs when they are encoded in the rRNA operon. Processes pre-crRNA and tracrRNA of type II CRISPR loci if present in the organism. In Acinetobacter baumannii (strain AB307-0294), this protein is Ribonuclease 3 (rnc).